The primary structure comprises 1935 residues: Myosin heavy chain, fast skeletal muscle (1935 aa).

Positions 32–81 constitute a Myosin N-terminal SH3-like domain; the sequence is DAKTAFFVVDPDEMYLKGTLVSKEGGKATVKTHSGKTVTVKEDEIFPMNP. A Myosin motor domain is found at 85 to 779; that stretch reads DKIEDMAMMT…LLGALEEMRD (695 aa). N6,N6,N6-trimethyllysine is present on lysine 129. Residue 178 to 185 participates in ATP binding; that stretch reads GESGAGKT. Actin-binding regions lie at residues 659–681 and 761–775; these read LMTN…ESKT and HTKV…GALE. The IQ domain maps to 782-811; the sequence is LALLVTMTQALCRGYVMRKEFVKMMERRES. The interval 812-839 is hinge; the sequence is IYSIQYNIRSFMNVKHWPWMKLYFKIKP. The stretch at 840-1935 forms a coiled coil; it reads LLKSAETEKE…RDAGKSKDEE (1096 aa). Disordered stretches follow at residues 1589-1608 and 1902-1935; these read RNSQ…EVRS and HELE…KDEE. Polar residues predominate over residues 1592–1603; that stretch reads QRVIDSMQSTLD. Basic and acidic residues-rich tracts occupy residues 1902-1913 and 1924-1935; these read HELEEAQERADV and KSRDAGKSKDEE.

The protein belongs to the TRAFAC class myosin-kinesin ATPase superfamily. Myosin family. As to quaternary structure, muscle myosin is a hexameric protein that consists of 2 heavy chain subunits (MHC), 2 alkali light chain subunits (MLC) and 2 regulatory light chain subunits (MLC-2).

Its subcellular location is the cytoplasm. It is found in the myofibril. Functionally, muscle contraction. The sequence is that of Myosin heavy chain, fast skeletal muscle from Cyprinus carpio (Common carp).